The chain runs to 616 residues: Dihydroxy-acid dehydratase (616 aa).

Residue Asp-81 participates in Mg(2+) binding. [2Fe-2S] cluster is bound at residue Cys-122. Mg(2+)-binding residues include Asp-123 and Lys-124. The residue at position 124 (Lys-124) is an N6-carboxylysine. Cys-195 serves as a coordination point for [2Fe-2S] cluster. Glu-491 is a Mg(2+) binding site. Ser-517 (proton acceptor) is an active-site residue.

It belongs to the IlvD/Edd family. In terms of assembly, homodimer. Requires [2Fe-2S] cluster as cofactor. Mg(2+) serves as cofactor.

The catalysed reaction is (2R)-2,3-dihydroxy-3-methylbutanoate = 3-methyl-2-oxobutanoate + H2O. The enzyme catalyses (2R,3R)-2,3-dihydroxy-3-methylpentanoate = (S)-3-methyl-2-oxopentanoate + H2O. Its pathway is amino-acid biosynthesis; L-isoleucine biosynthesis; L-isoleucine from 2-oxobutanoate: step 3/4. The protein operates within amino-acid biosynthesis; L-valine biosynthesis; L-valine from pyruvate: step 3/4. Functions in the biosynthesis of branched-chain amino acids. Catalyzes the dehydration of (2R,3R)-2,3-dihydroxy-3-methylpentanoate (2,3-dihydroxy-3-methylvalerate) into 2-oxo-3-methylpentanoate (2-oxo-3-methylvalerate) and of (2R)-2,3-dihydroxy-3-methylbutanoate (2,3-dihydroxyisovalerate) into 2-oxo-3-methylbutanoate (2-oxoisovalerate), the penultimate precursor to L-isoleucine and L-valine, respectively. This is Dihydroxy-acid dehydratase from Salmonella schwarzengrund (strain CVM19633).